Here is a 239-residue protein sequence, read N- to C-terminus: Ureidoacrylate amidohydrolase RutB (239 aa).

Asp-35 (proton acceptor) is an active-site residue. Lys-144 is a catalytic residue. Cys-177 (nucleophile) is an active-site residue.

This sequence belongs to the isochorismatase family. RutB subfamily.

The enzyme catalyses (Z)-3-ureidoacrylate + H2O + H(+) = (Z)-3-aminoacrylate + NH4(+) + CO2. It carries out the reaction (Z)-3-ureidoacrylate + H2O = (Z)-3-aminoacrylate + carbamate + H(+). The catalysed reaction is (Z)-2-methylureidoacrylate + H2O + H(+) = (Z)-2-methylaminoacrylate + NH4(+) + CO2. Its function is as follows. Hydrolyzes ureidoacrylate to form aminoacrylate and carbamate. The carbamate hydrolyzes spontaneously, thereby releasing one of the nitrogen atoms of the pyrimidine ring as ammonia and one of its carbon atoms as CO2. This Caulobacter segnis (strain ATCC 21756 / DSM 7131 / JCM 7823 / NBRC 15250 / LMG 17158 / TK0059) (Mycoplana segnis) protein is Ureidoacrylate amidohydrolase RutB.